The chain runs to 292 residues: 33 kDa chaperonin (292 aa).

Cystine bridges form between Cys230–Cys232 and Cys263–Cys266.

It belongs to the HSP33 family. Post-translationally, under oxidizing conditions two disulfide bonds are formed involving the reactive cysteines. Under reducing conditions zinc is bound to the reactive cysteines and the protein is inactive.

The protein localises to the cytoplasm. Its function is as follows. Redox regulated molecular chaperone. Protects both thermally unfolding and oxidatively damaged proteins from irreversible aggregation. Plays an important role in the bacterial defense system toward oxidative stress. The chain is 33 kDa chaperonin from Enterobacter sp. (strain 638).